We begin with the raw amino-acid sequence, 1009 residues long: Glutamate receptor ionotropic, delta-1 (1009 aa).

A signal peptide spans 1 to 20 (MEALTLWLLPWICQCVSVRA). The segment at 21–436 (DSIIHIGAIF…ERPMGSRLQG (416 aa)) is interaction with CBLN1. At 21–562 (DSIIHIGAIF…SIFSLFAPFD (542 aa)) the chain is on the extracellular side. 3 disulfide bridges follow: C80-C351, C96-C128, and C294-C306. N-linked (GlcNAc...) asparagine glycosylation is found at N131 and N200. N-linked (GlcNAc...) asparagine glycosylation is found at N422 and N498. Ca(2+) contacts are provided by E527, V530, and D531. The helical transmembrane segment at 563 to 583 (FAVWACIAAAIPVVGVLIFVL) threads the bilayer. The Cytoplasmic portion of the chain corresponds to 584-637 (NRIQAVRAQSAAQPRPSASATLHSAIWIVYGAFVQQGGESSVNSMAMRIVMGSW). Residues 638-658 (WLFTLIVCSSYTANLAAFLTV) traverse the membrane as a helical segment. Residues 659–830 (SRMDNPIRTF…ADGKSLKLHS (172 aa)) lie on the Extracellular side of the membrane. Ca(2+) contacts are provided by D753, D755, and S757. The helical transmembrane segment at 831-851 (FAGVFCILAIGLLLACLVAAL) threads the bilayer. The Cytoplasmic segment spans residues 852–1009 (ELWWNSNRCH…ALDTSHGTSI (158 aa)). Residues 930–942 (FLPEQSSHGTSRT) are compositionally biased toward polar residues. Residues 930 to 954 (FLPEQSSHGTSRTLSSGPSSNLPLP) form a disordered region. A compositionally biased stretch (low complexity) spans 943–954 (LSSGPSSNLPLP).

It belongs to the glutamate-gated ion channel (TC 1.A.10.1) family. GRID1 subfamily. As to quaternary structure, homodimer. Interacts (via extracellular N-terminal domain) with CBLN1 (via C1q domain), and more weakly with CBLN2; the interactions mediate the trans-synaptic adhesion complexes also with neurexins and are required for ligand-gated cation channel activity.

The protein localises to the postsynaptic cell membrane. The catalysed reaction is Ca(2+)(in) = Ca(2+)(out). It catalyses the reaction Na(+)(in) = Na(+)(out). Functionally, member of the ionotropic glutamate receptor family, which plays a crucial role in synaptic organization and signal transduction in the central nervous system. Although it shares structural features with ionotropic glutamate receptors, does not bind glutamate as a primary ligand. Instead, forms trans-synaptic adhesion complexes with presynaptic neurexins and cerebellins, regulating NMDA and AMPA receptor activity and influencing synaptic plasticity through signal transduction. In the presence of neurexins and cerebellins, forms cation-selective channels that are proposed to be gated by glycine and D-serine. However, recent research disputes this ligand-gated cation channel activity. Cation-selective ion channel can be triggered by GRM1 in dopaminergic neurons. Also acts as a receptor for GABA, modulating inhibitory synaptic plasticity through non-ionotropic mechanisms. The chain is Glutamate receptor ionotropic, delta-1 from Homo sapiens (Human).